A 344-amino-acid polypeptide reads, in one-letter code: Protein-glutamate methylesterase/protein-glutamine glutaminase (344 aa).

The Response regulatory domain occupies 7–124; sequence RVLVVDDSAF…SLTFRQVAPE (118 aa). Residue aspartate 58 is modified to 4-aspartylphosphate. In terms of domain architecture, CheB-type methylesterase spans 154–344; sequence PAVSGKIVVI…KIPEKLIELV (191 aa). Catalysis depends on residues serine 166, histidine 193, and aspartate 289.

Belongs to the CheB family. Phosphorylated by CheA. Phosphorylation of the N-terminal regulatory domain activates the methylesterase activity.

It is found in the cytoplasm. The catalysed reaction is [protein]-L-glutamate 5-O-methyl ester + H2O = L-glutamyl-[protein] + methanol + H(+). It carries out the reaction L-glutaminyl-[protein] + H2O = L-glutamyl-[protein] + NH4(+). Involved in chemotaxis. Part of a chemotaxis signal transduction system that modulates chemotaxis in response to various stimuli. Catalyzes the demethylation of specific methylglutamate residues introduced into the chemoreceptors (methyl-accepting chemotaxis proteins or MCP) by CheR. Also mediates the irreversible deamidation of specific glutamine residues to glutamic acid. This Thermotoga maritima (strain ATCC 43589 / DSM 3109 / JCM 10099 / NBRC 100826 / MSB8) protein is Protein-glutamate methylesterase/protein-glutamine glutaminase.